Here is a 274-residue protein sequence, read N- to C-terminus: Hydroxyacylglutathione hydrolase, cytoplasmic isozyme (274 aa).

Residues His59, His61, Asp63, His64, His121, and Asp144 each contribute to the Zn(2+) site. Residues Arg153 and 188–190 (HEY) each bind substrate. His188 serves as a coordination point for Zn(2+). A Phosphoserine modification is found at Ser257. Residue 268-271 (RAMK) participates in substrate binding.

The protein belongs to the metallo-beta-lactamase superfamily. Glyoxalase II family. Requires Zn(2+) as cofactor.

It is found in the cytoplasm. The catalysed reaction is an S-(2-hydroxyacyl)glutathione + H2O = a 2-hydroxy carboxylate + glutathione + H(+). The enzyme catalyses (R)-S-lactoylglutathione + H2O = (R)-lactate + glutathione + H(+). The protein operates within secondary metabolite metabolism; methylglyoxal degradation; (R)-lactate from methylglyoxal: step 2/2. Its activity is regulated as follows. Inhibited by various thiol compounds such as glutathione and coenzyme A. Its function is as follows. Thiolesterase that catalyzes the hydrolysis of S-D-lactoylglutathione to form glutathione and D-lactic acid. Involved in the metabolism of methylglyoxal, a toxic compound for yeast proliferation, by converting methylglyoxal to lactate via S-D-lactoylglutathione by sequential enzyme reactions catalyzed by glyoxalase I and glyoxalase II. This chain is Hydroxyacylglutathione hydrolase, cytoplasmic isozyme, found in Saccharomyces cerevisiae (strain ATCC 204508 / S288c) (Baker's yeast).